The following is a 287-amino-acid chain: Large ribosomal subunit protein uL2 (287 aa).

Positions 221 to 287 (RGSVMNPCDH…SKRSRGGRDS (67 aa)) are disordered. The segment covering 258–287 (KTRKKNKPSNKLVVRRRRRVSKRSRGGRDS) has biased composition (basic residues).

Belongs to the universal ribosomal protein uL2 family. Part of the 50S ribosomal subunit. Forms a bridge to the 30S subunit in the 70S ribosome.

One of the primary rRNA binding proteins. Required for association of the 30S and 50S subunits to form the 70S ribosome, for tRNA binding and peptide bond formation. It has been suggested to have peptidyltransferase activity; this is somewhat controversial. Makes several contacts with the 16S rRNA in the 70S ribosome. The protein is Large ribosomal subunit protein uL2 of Prochlorococcus marinus (strain AS9601).